A 645-amino-acid polypeptide reads, in one-letter code: 1,4-alpha-glucan branching enzyme GlgB (645 aa).

Asp-309 functions as the Nucleophile in the catalytic mechanism. Catalysis depends on Glu-352, which acts as the Proton donor. Positions 621–645 (MRKGSKKQDGKKAELRSNATSRRKR) are disordered. Positions 626 to 635 (KKQDGKKAEL) are enriched in basic and acidic residues.

The protein belongs to the glycosyl hydrolase 13 family. GlgB subfamily. In terms of assembly, monomer.

It catalyses the reaction Transfers a segment of a (1-&gt;4)-alpha-D-glucan chain to a primary hydroxy group in a similar glucan chain.. It functions in the pathway glycan biosynthesis; glycogen biosynthesis. Catalyzes the formation of the alpha-1,6-glucosidic linkages in glycogen by scission of a 1,4-alpha-linked oligosaccharide from growing alpha-1,4-glucan chains and the subsequent attachment of the oligosaccharide to the alpha-1,6 position. The polypeptide is 1,4-alpha-glucan branching enzyme GlgB (Bacillus cytotoxicus (strain DSM 22905 / CIP 110041 / 391-98 / NVH 391-98)).